A 321-amino-acid polypeptide reads, in one-letter code: MIIMNGPWVEKYRPQKLDDIVGQEHIIPRLKRYVEEKSMPNLMFTGPAGVGKTTAALALAREILGEYWRQNFLELNASDARGIDTVRTSIKNFCRLKPVGAPFRIIFLDEVDNMTKDAQHALRREMEMYTKTSSFILSCNYSSKIIDPIQSRCAIFRFLPLKGHQIIKRLEYIAEKENLEYEAHALETIVYFAEGDLRKAINLLQSAASLGEKITESSIYDVVSRARPKDVRKMIKTILDGKFMEARDMLREIMVLQGISGEDMVTQIYQELSRLAMEGEVDGDRYVGLIDAIGEYDFRIREGANPRIQLEALLARFLEHA.

Position 46-53 (46-53) interacts with ATP; it reads GPAGVGKT.

This sequence belongs to the activator 1 small subunits family. RfcS subfamily. As to quaternary structure, heterohexamer composed of four small subunits (RfcS) and two large subunits (RfcL).

Part of the RFC clamp loader complex which loads the PCNA sliding clamp onto DNA. The complex possesses DNA-dependent ATPase activity which is further stimulated by PCNA. In conjunction with PCNA stimulates DNA synthesis by PolB, relieving inhibition by replication protein A (RPA). The protein is Replication factor C small subunit (rfcS) of Methanothermobacter thermautotrophicus (strain ATCC 29096 / DSM 1053 / JCM 10044 / NBRC 100330 / Delta H) (Methanobacterium thermoautotrophicum).